A 163-amino-acid chain; its full sequence is Large ribosomal subunit protein uL10 (163 aa).

This sequence belongs to the universal ribosomal protein uL10 family. Part of the ribosomal stalk of the 50S ribosomal subunit. The N-terminus interacts with L11 and the large rRNA to form the base of the stalk. The C-terminus forms an elongated spine to which L12 dimers bind in a sequential fashion forming a multimeric L10(L12)X complex.

In terms of biological role, forms part of the ribosomal stalk, playing a central role in the interaction of the ribosome with GTP-bound translation factors. In Glaesserella parasuis serovar 5 (strain SH0165) (Haemophilus parasuis), this protein is Large ribosomal subunit protein uL10.